A 1303-amino-acid chain; its full sequence is Protein STU1 (1303 aa).

3 disordered regions span residues 239–259 (RGSDPEPHVQRANTPRSNTPV), 531–664 (SQRE…GAVS), and 953–977 (EASDSSPQKQSQMDQISSKRSNSEH). Over residues 249-259 (RANTPRSNTPV) the composition is skewed to polar residues. Residues 554–568 (SLKEAILEKNKELRQ) show a composition bias toward basic and acidic residues. The segment covering 573-583 (SRNSGEQSTKI) has biased composition (polar residues). A compositionally biased stretch (basic and acidic residues) spans 596–609 (SRLEKSLLRPDVGH). Over residues 618–629 (SSWTYPSTQSGP) the composition is skewed to polar residues. The span at 634-648 (KQRERSKTEVHKKSP) shows a compositional bias: basic and acidic residues. 2 stretches are compositionally biased toward polar residues: residues 653–664 (RPSSRLDTGAVS) and 955–972 (SDSSPQKQSQMDQISSKR).

The protein belongs to the CLASP family. Interacts with microtubules.

The protein resides in the cytoplasm. It is found in the cytoskeleton. It localises to the nucleus. Its subcellular location is the spindle. Functionally, microtubule binding protein that promotes the stabilization of dynamic microtubules. Required for mitotic spindle formation. This Candida albicans (strain SC5314 / ATCC MYA-2876) (Yeast) protein is Protein STU1 (STU1).